Consider the following 480-residue polypeptide: Glycogen synthase 1 (480 aa).

Residue K15 coordinates ADP-alpha-D-glucose.

Belongs to the glycosyltransferase 1 family. Bacterial/plant glycogen synthase subfamily.

It catalyses the reaction [(1-&gt;4)-alpha-D-glucosyl](n) + ADP-alpha-D-glucose = [(1-&gt;4)-alpha-D-glucosyl](n+1) + ADP + H(+). The protein operates within glycan biosynthesis; glycogen biosynthesis. Its function is as follows. Synthesizes alpha-1,4-glucan chains using ADP-glucose. In Rhizobium meliloti (strain 1021) (Ensifer meliloti), this protein is Glycogen synthase 1 (glgA1).